The chain runs to 461 residues: Phosphoglucosamine mutase (461 aa).

Serine 107 functions as the Phosphoserine intermediate in the catalytic mechanism. Serine 107, aspartate 254, aspartate 256, and aspartate 258 together coordinate Mg(2+). Serine 107 bears the Phosphoserine mark.

Belongs to the phosphohexose mutase family. It depends on Mg(2+) as a cofactor. Activated by phosphorylation.

It catalyses the reaction alpha-D-glucosamine 1-phosphate = D-glucosamine 6-phosphate. In terms of biological role, catalyzes the conversion of glucosamine-6-phosphate to glucosamine-1-phosphate. In Bifidobacterium longum (strain DJO10A), this protein is Phosphoglucosamine mutase.